A 429-amino-acid polypeptide reads, in one-letter code: Patatin-like phospholipase domain-containing protein 5 (429 aa).

One can recognise a PNPLA domain in the interval 12-181; it reads LSFSGAGYLG…SNNLPFADCP (170 aa). Positions 16 to 21 match the GXGXXG motif; sequence GAGYLG. The GXSXG signature appears at 47–51; it reads GSSSG. Ser-49 acts as the Nucleophile in catalysis. Asp-168 (proton acceptor) is an active-site residue. The DGA/G motif lies at 168–170; sequence DGA.

As to expression, expressed in brain and pituitary gland.

The catalysed reaction is a triacylglycerol + H2O = a diacylglycerol + a fatty acid + H(+). Functionally, has abundant triacylglycerol lipase activity. The polypeptide is Patatin-like phospholipase domain-containing protein 5 (Homo sapiens (Human)).